The sequence spans 837 residues: Striatin-interacting protein 1 (837 aa).

M1 is modified (N-acetylmethionine). 2 disordered regions span residues 1–67 (MEPA…ESPD) and 333–423 (AASP…KGLP). Over residues 18–35 (PQPPPPPPPAAAQPPPGA) the composition is skewed to pro residues. The segment covering 36–46 (PRAAAGLLPGG) has biased composition (low complexity). The segment covering 47 to 60 (KAREFNRNQRKDSE) has biased composition (basic and acidic residues). A phosphoserine mark is found at S59, S335, and S339. Basic and acidic residues predominate over residues 356–377 (KALIKQDNLDAFNERDPYKADD). Residues 378–391 (SREEEEENDDDNSL) show a composition bias toward acidic residues. S788 is subject to Phosphoserine. The required for STRIPAK core complex formation stretch occupies residues 796-837 (DNCLQSVLGQRVDLPEDFQMNYDLWLEREVFSKPISWEELLQ).

It belongs to the STRIP family. In terms of assembly, part of the core of STRIPAK complexes composed of PP2A catalytic and scaffolding subunits, the striatins (PP2A regulatory subunits), the striatin-associated proteins MOB4, STRIP1 and STRIP2, PDCD10 and members of the STE20 kinases, such as STK24 and STK26. The STRIPAK complex can be extended by adapter proteins such as SLMAP:SIKE1, CTTNBP2 or CTTNBP2NL. Interacts with CDC42BPB. Interacts with CTTNBP2NL.

It localises to the cytoplasm. Plays a role in the regulation of cell morphology and cytoskeletal organization. Required in the cortical actin filament dynamics and cell shape. Part of the striatin-interacting phosphatase and kinase (STRIPAK) complexes. STRIPAK complexes have critical roles in protein (de)phosphorylation and are regulators of multiple signaling pathways including Hippo, MAPK, nuclear receptor and cytoskeleton remodeling. Different types of STRIPAK complexes are involved in a variety of biological processes such as cell growth, differentiation, apoptosis, metabolism and immune regulation. The chain is Striatin-interacting protein 1 from Homo sapiens (Human).